The primary structure comprises 410 residues: Cytochrome P450 monooxygenase mpsF (410 aa).

Cys355 provides a ligand contact to heme.

The protein belongs to the cytochrome P450 family. Heme is required as a cofactor.

Its pathway is secondary metabolite biosynthesis. Its function is as follows. Cytochrome P450 monooxygenase; part of the gene cluster that mediates the biosynthesis of macrophasetins, 3-decalinoyltetramic acids (DTAs) which feature a tetramate (pyrrolidine-2,4-dione) unit connected to a decalin fragment and that have potent bioactivities. The PKS-NRPS mpsA together with its associated enoylreductase partner mpsG incorporate one unit of acetyl-CoA, seven units of malonyl-CoA, and one unit of L-alanine to assemble the linear tetramic acid intermediate corresponding to the backbone of macrophasetins. Without the Diels-Alderase mpsD, the mpsA/G product can undergo the non-enzymatic intramolecular Diels-Alder (IMDA) reaction to generate both macrophasetin A and macrophasetin B. Catalyzed by mpsD, the linear tetramic acid intermediate is thoroughly converted to macrophasetin A via the endo-IMDA reaction in a regioselective and stereoselective manner. Finally, the cytochrome P450 monooxygenase mpsF catalyzes the hydroxylation at C20 to yield the end product macrophasetin C. In Macrophomina phaseolina (strain MS6) (Charcoal rot fungus), this protein is Cytochrome P450 monooxygenase mpsF.